Reading from the N-terminus, the 352-residue chain is (2E,6E)-farnesyl diphosphate synthase (352 aa).

Isopentenyl diphosphate-binding residues include Lys43, Arg46, and His77. Mg(2+) contacts are provided by Asp84 and Asp88. The DDXXD motif signature appears at Asp84–Asp88. Isopentenyl diphosphate is bound at residue Arg94. The DDXXD motif motif lies at Asp236–Gly240.

It belongs to the FPP/GGPP synthase family. Mg(2+) serves as cofactor.

It catalyses the reaction isopentenyl diphosphate + dimethylallyl diphosphate = (2E)-geranyl diphosphate + diphosphate. It carries out the reaction isopentenyl diphosphate + (2E)-geranyl diphosphate = (2E,6E)-farnesyl diphosphate + diphosphate. The protein operates within isoprenoid biosynthesis; geranyl diphosphate biosynthesis; geranyl diphosphate from dimethylallyl diphosphate and isopentenyl diphosphate: step 1/1. Its pathway is isoprenoid biosynthesis; farnesyl diphosphate biosynthesis; farnesyl diphosphate from geranyl diphosphate and isopentenyl diphosphate. Its function is as follows. Catalyzes the sequential condensations of isopentenyl pyrophosphate (IPP) with dimethylallyl diphosphate (DMAPP) to yield geranyl diphosphate (GPP) and with GPP to yield (2E,6E)-farnesyl diphosphate (E,E-FPP). This chain is (2E,6E)-farnesyl diphosphate synthase, found in Mycobacterium tuberculosis (strain ATCC 25618 / H37Rv).